The chain runs to 441 residues: Plasmepsin VI (441 aa).

Over 1-7 the chain is Cytoplasmic; it reads MTNFCIK. Residues 8 to 28 traverse the membrane as a helical; Signal-anchor for type II membrane protein segment; the sequence is SYLFLYLSFLLFFDIITIFHV. The Extracellular portion of the chain corresponds to 29-441; that stretch reads SSIRISTVLK…VGVVKSNHNF (413 aa). Residues 109–435 form the Peptidase A1 domain; sequence FIGDIEIGNP…DNDHKLVGVV (327 aa). Active-site residues include D127 and D324.

The protein belongs to the peptidase A1 family.

The protein resides in the membrane. In terms of biological role, during the development in the mosquito midgut, plays a role in sporozoite egress from oocysts. The chain is Plasmepsin VI from Plasmodium berghei (strain Anka).